A 73-amino-acid chain; its full sequence is Translation initiation factor IF-1 (73 aa).

Positions 1–73 (MAKKEDTLVL…TKARVVYRHR (73 aa)) constitute an S1-like domain.

This sequence belongs to the IF-1 family. Component of the 30S ribosomal translation pre-initiation complex which assembles on the 30S ribosome in the order IF-2 and IF-3, IF-1 and N-formylmethionyl-tRNA(fMet); mRNA recruitment can occur at any time during PIC assembly.

The protein localises to the cytoplasm. One of the essential components for the initiation of protein synthesis. Stabilizes the binding of IF-2 and IF-3 on the 30S subunit to which N-formylmethionyl-tRNA(fMet) subsequently binds. Helps modulate mRNA selection, yielding the 30S pre-initiation complex (PIC). Upon addition of the 50S ribosomal subunit IF-1, IF-2 and IF-3 are released leaving the mature 70S translation initiation complex. The chain is Translation initiation factor IF-1 from Chlamydia pneumoniae (Chlamydophila pneumoniae).